Consider the following 458-residue polypeptide: Adenylosuccinate synthetase (458 aa).

Residues 17–23 (GDEGKGK) and 45–47 (GHT) contribute to the GTP site. The active-site Proton acceptor is the D18. Positions 18 and 45 each coordinate Mg(2+). IMP contacts are provided by residues 18–21 (DEGK), 43–46 (NAGH), T137, R151, Q247, T262, and R330. H46 acts as the Proton donor in catalysis. 326 to 332 (VTTGRSR) contributes to the substrate binding site. GTP is bound by residues R332, 358 to 360 (KLD), and 440 to 442 (STS).

Belongs to the adenylosuccinate synthetase family. In terms of assembly, homodimer. Mg(2+) serves as cofactor.

The protein resides in the cytoplasm. It catalyses the reaction IMP + L-aspartate + GTP = N(6)-(1,2-dicarboxyethyl)-AMP + GDP + phosphate + 2 H(+). The protein operates within purine metabolism; AMP biosynthesis via de novo pathway; AMP from IMP: step 1/2. Its function is as follows. Plays an important role in the de novo pathway of purine nucleotide biosynthesis. Catalyzes the first committed step in the biosynthesis of AMP from IMP. In Acidovorax ebreus (strain TPSY) (Diaphorobacter sp. (strain TPSY)), this protein is Adenylosuccinate synthetase.